Here is a 142-residue protein sequence, read N- to C-terminus: Maximins y/Hw (142 aa).

Residues 1 to 18 (MIFKYIVAVSFLIASGYA) form the signal peptide. Residues 19–43 (RSVKNDEQSLSQREVLEEESLREIR) constitute a propeptide that is removed on maturation. Phe68 carries the phenylalanine amide modification. A propeptide spanning residues 72-121 (TAEDHEVMKRLEAVIRDLDSLDHSEEASERETRGFNQEEIANLFTKKEKR) is cleaved from the precursor. Residue Ile141 is modified to Isoleucine amide.

It belongs to the bombinin family. Expressed by the skin glands.

Its subcellular location is the secreted. In terms of biological role, maximin-y shows antimicrobial activity against bacteria and against the fungus C.albicans. It has little hemolytic activity. Its function is as follows. Maximin-Hw shows antimicrobial activity against bacteria and against the fungus C.albicans. Shows strong hemolytic activity. The chain is Maximins y/Hw from Bombina maxima (Giant fire-bellied toad).